Consider the following 429-residue polypeptide: Formate-dependent phosphoribosylglycinamide formyltransferase (429 aa).

N(1)-(5-phospho-beta-D-ribosyl)glycinamide is bound by residues 26–27 and E86; that span reads EL. ATP contacts are provided by residues R118, K159, 199–202, and E207; that span reads EEHI. The region spanning 123–319 is the ATP-grasp domain; sequence ETLAREAKVP…EFGLHLRAVL (197 aa). The Mg(2+) site is built by E276 and E288. N(1)-(5-phospho-beta-D-ribosyl)glycinamide contacts are provided by residues D295, K375, and 382–383; that span reads RR.

Belongs to the PurK/PurT family. Homodimer.

The catalysed reaction is N(1)-(5-phospho-beta-D-ribosyl)glycinamide + formate + ATP = N(2)-formyl-N(1)-(5-phospho-beta-D-ribosyl)glycinamide + ADP + phosphate + H(+). The protein operates within purine metabolism; IMP biosynthesis via de novo pathway; N(2)-formyl-N(1)-(5-phospho-D-ribosyl)glycinamide from N(1)-(5-phospho-D-ribosyl)glycinamide (formate route): step 1/1. Involved in the de novo purine biosynthesis. Catalyzes the transfer of formate to 5-phospho-ribosyl-glycinamide (GAR), producing 5-phospho-ribosyl-N-formylglycinamide (FGAR). Formate is provided by PurU via hydrolysis of 10-formyl-tetrahydrofolate. The sequence is that of Formate-dependent phosphoribosylglycinamide formyltransferase from Thermococcus kodakarensis (strain ATCC BAA-918 / JCM 12380 / KOD1) (Pyrococcus kodakaraensis (strain KOD1)).